The chain runs to 106 residues: Nucleoid-associated protein BBta_7345 (106 aa).

The protein belongs to the YbaB/EbfC family. Homodimer.

Its subcellular location is the cytoplasm. It localises to the nucleoid. Its function is as follows. Binds to DNA and alters its conformation. May be involved in regulation of gene expression, nucleoid organization and DNA protection. In Bradyrhizobium sp. (strain BTAi1 / ATCC BAA-1182), this protein is Nucleoid-associated protein BBta_7345.